The primary structure comprises 250 residues: 5-oxoprolinase subunit A (250 aa).

The protein belongs to the LamB/PxpA family. In terms of assembly, forms a complex composed of PxpA, PxpB and PxpC.

The catalysed reaction is 5-oxo-L-proline + ATP + 2 H2O = L-glutamate + ADP + phosphate + H(+). In terms of biological role, catalyzes the cleavage of 5-oxoproline to form L-glutamate coupled to the hydrolysis of ATP to ADP and inorganic phosphate. This is 5-oxoprolinase subunit A from Thermus thermophilus (strain ATCC 27634 / DSM 579 / HB8).